Here is a 190-residue protein sequence, read N- to C-terminus: Glutathione peroxidase 2 (190 aa).

Selenocysteine 40 is an active-site residue. Residue selenocysteine 40 is a non-standard amino acid, selenocysteine.

Belongs to the glutathione peroxidase family. In terms of assembly, homotetramer.

The protein resides in the cytoplasm. It is found in the cytosol. The enzyme catalyses 2 glutathione + H2O2 = glutathione disulfide + 2 H2O. It carries out the reaction a hydroperoxy polyunsaturated fatty acid + 2 glutathione = a hydroxy polyunsaturated fatty acid + glutathione disulfide + H2O. It catalyses the reaction tert-butyl hydroperoxide + 2 glutathione = tert-butanol + glutathione disulfide + H2O. The catalysed reaction is cumene hydroperoxide + 2 glutathione = 2-phenylpropan-2-ol + glutathione disulfide + H2O. The enzyme catalyses (13S)-hydroperoxy-(9Z,11E)-octadecadienoate + 2 glutathione = (13S)-hydroxy-(9Z,11E)-octadecadienoate + glutathione disulfide + H2O. It carries out the reaction (5S)-hydroperoxy-(6E,8Z,11Z,14Z)-eicosatetraenoate + 2 glutathione = (5S)-hydroxy-(6E,8Z,11Z,14Z)-eicosatetraenoate + glutathione disulfide + H2O. It catalyses the reaction (12R)-hydroperoxy-(5Z,8Z,10E,14Z)-eicosatetraenoate + 2 glutathione = (12R)-hydroxy-(5Z,8Z,10E,14Z)-eicosatetraenoate + glutathione disulfide + H2O. The catalysed reaction is (15S)-hydroperoxy-(5Z,8Z,11Z,13E)-eicosatetraenoate + 2 glutathione = (15S)-hydroxy-(5Z,8Z,11Z,13E)-eicosatetraenoate + glutathione disulfide + H2O. Its function is as follows. Catalyzes the reduction of hydroperoxides in a glutathione-dependent manner thus regulating cellular redox homeostasis. Can reduce small soluble hydroperoxides such as H2O2, cumene hydroperoxide and tert-butyl hydroperoxide, as well as several fatty acid-derived hydroperoxides. Cannot reduce phosphatidycholine hydroperoxide. In Pongo pygmaeus (Bornean orangutan), this protein is Glutathione peroxidase 2 (GPX2).